A 337-amino-acid chain; its full sequence is MKNKDYPLRSSMDELSTKNDNEIDLEKGPLPEYNSEDESTLPPYSEIWKYIKTVSEDSSTGPTETTNPNVERRQEFKDSHPNIYSLLRLLISVLAVIVVFFTAWVCVNPLEKSIFGKVAFFVTIGITCPILLITIFCFFETWTQAVAQCIKVTVIFLAQCVKVTAVGLYNSREKWVVIIWLLWVVICYTLFLRSKFGNLNLNKALICSTCSISAALLLFLLYVRLPFWTLKHMFSGLFQVLGVQSCVVIVTKGLTYLFDKHIDATGYEIEASSLFVIGNFLFFYEMECPGALKRMPKFIRNGIASFLEGIGNIGRAFRGANDNNDIPLGEMEVESEV.

Over residues 1–29 the composition is skewed to basic and acidic residues; it reads MKNKDYPLRSSMDELSTKNDNEIDLEKGP. Positions 1–40 are disordered; it reads MKNKDYPLRSSMDELSTKNDNEIDLEKGPLPEYNSEDEST. 6 helical membrane passes run 89–109, 119–139, 149–169, 176–196, 210–230, and 234–254; these read LLIS…CVNP, AFFV…FCFF, CIKV…VGLY, VVII…RSKF, CSIS…FWTL, and FSGL…TKGL.

This sequence belongs to the WTF family. As to quaternary structure, homomer. Forms protein aggregates. The two isoforms can interact with each other and with themselves. High sequence similarity is required for their interaction.

It is found in the spore membrane. The protein localises to the vacuole membrane. The protein resides in the ascus epiplasm. It localises to the cytoplasm. Its subcellular location is the endoplasmic reticulum membrane. In terms of biological role, promotes unequal transmission of alleles from the parental zygote to progeny spores by acting as poison/antidote system where the poison and antidote proteins are produced from the same locus; the poison component is trans-acting and targets all spores within an ascus whereas the antidote component is spore-specific, leading to poisoning of all progeny that do not inherit the allele. Its function is as follows. Localizes isoform 2 to the vacuole thereby facilitating its degradation. Functionally, forms toxic aggregates that disrupt spore maturation. In Schizosaccharomyces kambucha (Fission yeast), this protein is Meiotic driver wtf4.